Consider the following 491-residue polypeptide: 3-epi-6-deoxocathasterone 23-monooxygenase CYP90D1 (491 aa).

A helical transmembrane segment spans residues 7 to 27 (LLFFSFFFFIIIVIFNKINGL). Residue Cys442 participates in heme binding.

This sequence belongs to the cytochrome P450 family. Requires heme as cofactor. Expressed in leaf vascular tissue.

It is found in the endoplasmic reticulum membrane. The catalysed reaction is 3-epi-6-deoxocathasterone + reduced [NADPH--hemoprotein reductase] + O2 = 6-deoxotyphasterol + oxidized [NADPH--hemoprotein reductase] + H2O + H(+). It carries out the reaction (22S,24R)-22-hydroxy-5alpha-ergostan-3-one + reduced [NADPH--hemoprotein reductase] + O2 = 3-dehydro-6-deoxoteasterone + oxidized [NADPH--hemoprotein reductase] + H2O + H(+). The protein operates within plant hormone biosynthesis; brassinosteroid biosynthesis. Functionally, involved in brassinosteroid (BR) biosynthesis. May convert teasterone (TE) to 3-dehydroteasterone (3DT, 3-DHT), or 6-deoxoteasterone (6-deoxoTE) to 3-dehydro-6-deoxoteasterone (6-deoxo3DT, 6-deoxo3DHT). C-23 hydroxylase that converts directly (22S,24R)-22-hydroxy-5-alpha-ergostan-3-one and 3-epi-6-deoxocathasterone to 3-dehydro-6-deoxoteasterone (6-deoxo3DT, 6-deoxo3DHT) and 6-deoxotyphasterol (6-deoxoTY), respectively. These C-23 hydroxylation shortcuts bypass campestanol, 6-deoxocathasterone, and 6-deoxoteasterone (6-deoxoTE). Also catalyzes the conversion of cathasterone to teasterone (TE), 6-deoxotyphasterol (6-deoxoTY) to 6-deoxocathasterone (6-deoxoCT), (22S,24R)-22-hydroxyergost-4-en-3-one (22-OH-4-en-3-one) to (22R,23R)-22,23-dihydroxy-campest-4-en-3-one (22,23-diOH-4-en-3-one) and (22S)-22-hydroxycampesterol (22-OHCR) to (22R,23R)-22,23-dihydroxycampesterol (22,23-diOHCR). The sequence is that of 3-epi-6-deoxocathasterone 23-monooxygenase CYP90D1 from Arabidopsis thaliana (Mouse-ear cress).